Here is a 304-residue protein sequence, read N- to C-terminus: Homoserine kinase (304 aa).

86–96 (PLARGLGSSAA) serves as a coordination point for ATP.

Belongs to the GHMP kinase family. Homoserine kinase subfamily.

The protein resides in the cytoplasm. The enzyme catalyses L-homoserine + ATP = O-phospho-L-homoserine + ADP + H(+). It participates in amino-acid biosynthesis; L-threonine biosynthesis; L-threonine from L-aspartate: step 4/5. Its function is as follows. Catalyzes the ATP-dependent phosphorylation of L-homoserine to L-homoserine phosphate. The protein is Homoserine kinase of Carboxydothermus hydrogenoformans (strain ATCC BAA-161 / DSM 6008 / Z-2901).